The sequence spans 461 residues: ADP-specific phosphofructokinase (461 aa).

An ADPK domain is found at 1–457; the sequence is MVRELLEKAR…FASYLAMLKE (457 aa). Positions 268, 298, and 441 each coordinate Mg(2+). The active-site Proton acceptor is Asp441.

The protein belongs to the carbohydrate kinase PfkC family. Mg(2+) serves as cofactor.

The protein localises to the cytoplasm. It carries out the reaction beta-D-fructose 6-phosphate + ADP = beta-D-fructose 1,6-bisphosphate + AMP + H(+). It participates in carbohydrate degradation; glycolysis. In terms of biological role, catalyzes the phosphorylation of fructose 6-phosphate to fructose 1,6-bisphosphate using ADP as the phosphate donor. The protein is ADP-specific phosphofructokinase of Thermococcus zilligii.